We begin with the raw amino-acid sequence, 84 residues long: Small ribosomal subunit protein uS17 (84 aa).

The protein belongs to the universal ribosomal protein uS17 family. In terms of assembly, part of the 30S ribosomal subunit.

In terms of biological role, one of the primary rRNA binding proteins, it binds specifically to the 5'-end of 16S ribosomal RNA. This chain is Small ribosomal subunit protein uS17, found in Thermoanaerobacter pseudethanolicus (strain ATCC 33223 / 39E) (Clostridium thermohydrosulfuricum).